The primary structure comprises 464 residues: Sensor protein IrlS (464 aa).

Topologically, residues 1-13 (MIRRLLPRTLRAR) are periplasmic. The helical transmembrane segment at 14-34 (LTALIILSTAATLALSGVALY) threads the bilayer. Over 35 to 166 (SALHNRLVGM…DHALLRAYAY (132 aa)) the chain is Cytoplasmic. The helical transmembrane segment at 167 to 187 (TVVVIEVLAVVLTAALAYGIA) threads the bilayer. The region spanning 188 to 241 (MLGLSPLRRLVARAEQMSSSRLAQPLPELDTSGELKEMEHAFNAMLKRLDESFV) is the HAMP domain. Residues 188-464 (MLGLSPLRRL…FWLKFPAHAA (277 aa)) are Periplasmic-facing. The region spanning 249-463 (NLAHDMRTPL…TFWLKFPAHA (215 aa)) is the Histidine kinase domain. Position 252 is a phosphohistidine; by autocatalysis (His-252).

It localises to the cell inner membrane. It catalyses the reaction ATP + protein L-histidine = ADP + protein N-phospho-L-histidine.. Member of the two-component regulatory system IrlR/IrlS. May be involved in invasion of eukaryotic cells and heavy-metal resistance. Probably activates IrlR by phosphorylation. In Burkholderia pseudomallei (strain K96243), this protein is Sensor protein IrlS (irlS).